The following is a 233-amino-acid chain: Large ribosomal subunit protein uL1 (233 aa).

It belongs to the universal ribosomal protein uL1 family. In terms of assembly, part of the 50S ribosomal subunit.

Its function is as follows. Binds directly to 23S rRNA. The L1 stalk is quite mobile in the ribosome, and is involved in E site tRNA release. In terms of biological role, protein L1 is also a translational repressor protein, it controls the translation of the L11 operon by binding to its mRNA. The sequence is that of Large ribosomal subunit protein uL1 from Shewanella loihica (strain ATCC BAA-1088 / PV-4).